A 520-amino-acid polypeptide reads, in one-letter code: Glucose-1-phosphate adenylyltransferase small subunit, chloroplastic (520 aa).

The transit peptide at 1–71 (MATMAAIGSL…RTPSIVSPKA (71 aa)) directs the protein to the chloroplast. The interval 1–81 (MATMAAIGSL…VSDSQNSQTC (81 aa)) is disordered. Over residues 14 to 27 (SSSSNHTRRLSSSS) the composition is skewed to low complexity. Positions 28 to 51 (QRKTLSFSSSSLTGEKLNPTQEII) are enriched in polar residues.

It belongs to the bacterial/plant glucose-1-phosphate adenylyltransferase family. As to quaternary structure, heterotetramer. As to expression, leaves.

Its subcellular location is the plastid. It is found in the chloroplast. It catalyses the reaction alpha-D-glucose 1-phosphate + ATP + H(+) = ADP-alpha-D-glucose + diphosphate. The protein operates within glycan biosynthesis; starch biosynthesis. Its activity is regulated as follows. Activated by 3'phosphoglycerate, inhibited by orthophosphate. Allosteric regulation. In terms of biological role, this protein plays a role in synthesis of starch. It catalyzes the synthesis of the activated glycosyl donor, ADP-glucose from Glc-1-P and ATP. The sequence is that of Glucose-1-phosphate adenylyltransferase small subunit, chloroplastic (AGPS1) from Brassica napus (Rape).